The chain runs to 1637 residues: Endoribonuclease Dicer homolog 3b (1637 aa).

The tract at residues 1 to 40 is disordered; it reads MADDEAAVLPPPPPLPPPCRPHRQLRPRGSRPTADTTPRT. Over residues 9–19 the composition is skewed to pro residues; the sequence is LPPPPPLPPPC. Positions 20-29 are enriched in basic residues; that stretch reads RPHRQLRPRG. The 177-residue stretch at 46–222 folds into the Helicase ATP-binding domain; it reads VFEAALRGNT…LHNCEAHISQ (177 aa). 59-66 contacts ATP; sequence LDTGSGKT. The short motif at 169-172 is the DECH box element; sequence DECH. The region spanning 404 to 556 is the Helicase C-terminal domain; the sequence is SFGSSNEVLC…ALYRHPNALS (153 aa). The 91-residue stretch at 581–671 folds into the Dicer dsRNA-binding fold domain; it reads CVNLIRKYCE…VPLTEEPMDT (91 aa). Residues 882–1006 enclose the PAZ domain; that stretch reads EIIHLANKSL…VPPELLIHLD (125 aa). The 170-residue stretch at 1031-1200 folds into the RNase III 1 domain; the sequence is ASQLRREIGY…LVGAYYVGGG (170 aa). Asp1214, Asp1309, and Ser1312 together coordinate Mg(2+). The RNase III 2 domain occupies 1241-1389; that stretch reads IEELEAKLKY…IAGAVFIDTD (149 aa). 2 DRBM domains span residues 1412 to 1481 and 1545 to 1629; these read LALP…DLKQ and GPRS…KLQE.

This sequence belongs to the helicase family. Dicer subfamily. May interact with ARGONAUTE1 or PINHEAD through their common PAZ domains. Requires Mg(2+) as cofactor. Mn(2+) serves as cofactor.

The protein resides in the nucleus. Probably involved in the RNA silencing pathway. May cleave double-stranded RNA to produce short 21-24 nucleotides (nt) RNAs which target the selective destruction of complementary RNAs. This Oryza sativa subsp. japonica (Rice) protein is Endoribonuclease Dicer homolog 3b (DCL3B).